We begin with the raw amino-acid sequence, 437 residues long: MTVSSPFPRIPDPGVPVLVAFSGGLDSTVLLHCLASQPTQRIHGLEAIHIHHGLNENADAWTAHCAAFCTQHDIRLHIARVHVSHNSGQGLEAAARTARRAAFAHTLQHGHYLALAHHCDDQAETWLLRALRGSCDGLAAMRPLTPFAAGHLWRPLLTHSRAQLLDYAQQQHLDWIEDSSNADLRHDRNFLRIHVLPLLHQRWPQATAVLARNAALAAANADLLNAEDAVLLPDLLDPDGALDINALTAHPPARRARLLRAWCARAGAPPLPERGVNIIERELLPARHDSAACFTWSHTEIRRWRLRLYLHRPQPPWPPDWQPLWSGTAPLILPDGGQLHLESTDHETVPGFPHPLRVRARRGGERLILPGRTHSHPLKHLLQDVGIPPWRRASMPLLCDGEQILAVGDALLAAPLVTWLQAHRLKLRWQYHNNTCI.

Position 22 to 27 (22 to 27 (SGGLDS)) interacts with ATP.

It belongs to the tRNA(Ile)-lysidine synthase family.

It localises to the cytoplasm. The catalysed reaction is cytidine(34) in tRNA(Ile2) + L-lysine + ATP = lysidine(34) in tRNA(Ile2) + AMP + diphosphate + H(+). Ligates lysine onto the cytidine present at position 34 of the AUA codon-specific tRNA(Ile) that contains the anticodon CAU, in an ATP-dependent manner. Cytidine is converted to lysidine, thus changing the amino acid specificity of the tRNA from methionine to isoleucine. The chain is tRNA(Ile)-lysidine synthase from Xylella fastidiosa (strain Temecula1 / ATCC 700964).